Here is a 185-residue protein sequence, read N- to C-terminus: MLQEVYAQTKEHMEKSIEALKKDYKSLRTGKVNTNILDGIKVDYYGTMTDLSQVGSVLATDATTITINPWEKNLLGTIEKAIQNANIGVNPNNDGQIIKLFFPPMTVEQRQETAKHAKTMTDNAKVAIRNIRQNSNNKVKTLLKDKAITEDESKKAQDEIQKITDSYVLKADETLKAKEKEILTV.

This sequence belongs to the RRF family.

The protein resides in the cytoplasm. In terms of biological role, responsible for the release of ribosomes from messenger RNA at the termination of protein biosynthesis. May increase the efficiency of translation by recycling ribosomes from one round of translation to another. The sequence is that of Ribosome-recycling factor from Aliarcobacter butzleri (strain RM4018) (Arcobacter butzleri).